Here is a 182-residue protein sequence, read N- to C-terminus: ATP-dependent protease subunit HslV (182 aa).

Residue Thr-6 is part of the active site. Residues Ala-164, Cys-167, and Thr-170 each coordinate Na(+).

It belongs to the peptidase T1B family. HslV subfamily. As to quaternary structure, a double ring-shaped homohexamer of HslV is capped on each side by a ring-shaped HslU homohexamer. The assembly of the HslU/HslV complex is dependent on binding of ATP.

The protein resides in the cytoplasm. It carries out the reaction ATP-dependent cleavage of peptide bonds with broad specificity.. With respect to regulation, allosterically activated by HslU binding. Its function is as follows. Protease subunit of a proteasome-like degradation complex believed to be a general protein degrading machinery. The protein is ATP-dependent protease subunit HslV of Borrelia garinii subsp. bavariensis (strain ATCC BAA-2496 / DSM 23469 / PBi) (Borreliella bavariensis).